Here is a 158-residue protein sequence, read N- to C-terminus: UPF0225 protein PSEEN1229 (158 aa).

The protein belongs to the UPF0225 family.

In Pseudomonas entomophila (strain L48), this protein is UPF0225 protein PSEEN1229.